Here is a 284-residue protein sequence, read N- to C-terminus: Shikimate dehydrogenase (NADP(+)) (284 aa).

Residues 20–22 (SIS) and Ser67 contribute to the shikimate site. The active-site Proton acceptor is the Lys71. Residue Asp83 participates in NADP(+) binding. Shikimate contacts are provided by Asn92 and Asp107. NADP(+) is bound by residues 129–133 (GAGGA) and Ile227. Tyr229 contacts shikimate. Gly250 contributes to the NADP(+) binding site.

The protein belongs to the shikimate dehydrogenase family. Homodimer.

It catalyses the reaction shikimate + NADP(+) = 3-dehydroshikimate + NADPH + H(+). It functions in the pathway metabolic intermediate biosynthesis; chorismate biosynthesis; chorismate from D-erythrose 4-phosphate and phosphoenolpyruvate: step 4/7. Functionally, involved in the biosynthesis of the chorismate, which leads to the biosynthesis of aromatic amino acids. Catalyzes the reversible NADPH linked reduction of 3-dehydroshikimate (DHSA) to yield shikimate (SA). This is Shikimate dehydrogenase (NADP(+)) from Streptococcus pneumoniae (strain P1031).